Here is a 174-residue protein sequence, read N- to C-terminus: Translation initiation factor IF-3 (174 aa).

This sequence belongs to the IF-3 family. In terms of assembly, monomer.

It is found in the cytoplasm. Functionally, IF-3 binds to the 30S ribosomal subunit and shifts the equilibrium between 70S ribosomes and their 50S and 30S subunits in favor of the free subunits, thus enhancing the availability of 30S subunits on which protein synthesis initiation begins. This is Translation initiation factor IF-3 from Azorhizobium caulinodans (strain ATCC 43989 / DSM 5975 / JCM 20966 / LMG 6465 / NBRC 14845 / NCIMB 13405 / ORS 571).